The following is a 78-amino-acid chain: MSRVCQVSGKRVQTGNNVSHANNRTRRRFLPNLHERRFWVASENRWVKLRVSAHALRTIDKNGIDAVLKELRARGEKV.

Positions 1–23 (MSRVCQVSGKRVQTGNNVSHANN) are disordered. Residues 11 to 22 (RVQTGNNVSHAN) show a composition bias toward polar residues.

The protein belongs to the bacterial ribosomal protein bL28 family.

The chain is Large ribosomal subunit protein bL28 from Xanthomonas campestris pv. campestris (strain 8004).